Reading from the N-terminus, the 552-residue chain is Membrane protein insertase YidC (552 aa).

A helical membrane pass occupies residues 3–23; sequence TKRLILFVIFSFSILMLWDSW. The tract at residues 29–65 is disordered; that stretch reads PPAASQTQTTAQSVEDGSVPQAAKSSASAANQASVPA. 4 helical membrane-spanning segments follow: residues 359 to 379, 429 to 449, 463 to 483, and 503 to 523; these read WGVA…PLSA, LPIL…LGSV, LSAV…MIIQ, and PIVF…YWLV.

The protein belongs to the OXA1/ALB3/YidC family. Type 1 subfamily. In terms of assembly, interacts with the Sec translocase complex via SecD. Specifically interacts with transmembrane segments of nascent integral membrane proteins during membrane integration.

The protein resides in the cell inner membrane. Its function is as follows. Required for the insertion and/or proper folding and/or complex formation of integral membrane proteins into the membrane. Involved in integration of membrane proteins that insert both dependently and independently of the Sec translocase complex, as well as at least some lipoproteins. Aids folding of multispanning membrane proteins. This chain is Membrane protein insertase YidC, found in Methylobacillus flagellatus (strain ATCC 51484 / DSM 6875 / VKM B-1610 / KT).